The chain runs to 96 residues: Co-chaperonin GroES (96 aa).

This sequence belongs to the GroES chaperonin family. Heptamer of 7 subunits arranged in a ring. Interacts with the chaperonin GroEL.

It localises to the cytoplasm. Its function is as follows. Together with the chaperonin GroEL, plays an essential role in assisting protein folding. The GroEL-GroES system forms a nano-cage that allows encapsulation of the non-native substrate proteins and provides a physical environment optimized to promote and accelerate protein folding. GroES binds to the apical surface of the GroEL ring, thereby capping the opening of the GroEL channel. The protein is Co-chaperonin GroES of Colwellia maris.